We begin with the raw amino-acid sequence, 204 residues long: Elongation factor Ts (204 aa).

The interval 87–90 (TDFV) is involved in Mg(2+) ion dislocation from EF-Tu.

The protein belongs to the EF-Ts family.

It is found in the cytoplasm. Associates with the EF-Tu.GDP complex and induces the exchange of GDP to GTP. It remains bound to the aminoacyl-tRNA.EF-Tu.GTP complex up to the GTP hydrolysis stage on the ribosome. The protein is Elongation factor Ts of Frankia alni (strain DSM 45986 / CECT 9034 / ACN14a).